The primary structure comprises 282 residues: MKLIVISGRSGSGKTIALHVLEDLGYNCIDGVPFQLLAQLIDTVDPKNNKVAISLDIRNLPTDASQIQTLLSSLQQKVEVEIIYLDAISAELIRRYSETRRLHPLSKNKLSLSQALELENELLEPIHKRAALSIDTTTLSIHNLNERLKIHLQGSTKSNLLIIFQSFGFKNIHPDDADYIFDVRFLPNPHWEPTLQKYTGKDQPVKAFLNGHLVVKQTINQIENLFHSWLPYLEENNRNYVTIAIGCTGGKHRSVYVAEQLAAQFKQKYQVQIEHKGLKDQL.

Position 8-15 (8-15 (GRSGSGKT)) interacts with ATP. 56 to 59 (DIRN) is a binding site for GTP.

This sequence belongs to the RapZ-like family.

Its function is as follows. Displays ATPase and GTPase activities. In Psychromonas ingrahamii (strain DSM 17664 / CCUG 51855 / 37), this protein is Nucleotide-binding protein Ping_2894.